The primary structure comprises 225 residues: MAIKDWPQGEGPREKLLRSGVAQLSDAELLAVLLRNGLKGQSAVSLARVMLTHFGGLRALFSASLSELCDIQGIGPVKYAQLQAAIELSKRIAQENLQRGKILSDPDLTRDYLMRQLADRAYEVFAILLLDSQHRVIQFVELFRGTIDSASVYPREVVSLVLEKKAAAVIVCHNHPSGGAEPSHADRRITERLKYALATIDVSLLDHMVVGDREIVSFAERGWID.

An MPN domain is found at 102 to 224 (ILSDPDLTRD…IVSFAERGWI (123 aa)). Residues histidine 173, histidine 175, and aspartate 186 each contribute to the Zn(2+) site. A JAMM motif motif is present at residues 173–186 (HNHPSGGAEPSHAD).

The protein belongs to the UPF0758 family.

The polypeptide is UPF0758 protein Shew_3481 (Shewanella loihica (strain ATCC BAA-1088 / PV-4)).